We begin with the raw amino-acid sequence, 586 residues long: Guanylate-binding protein 5 (586 aa).

The tract at residues 1 to 306 (MALEIHMSDP…TYVNAISSGD (306 aa)) is NLRP3-binding. The tract at residues 1–309 (MALEIHMSDP…NAISSGDLPC (309 aa)) is GTPase domain (Globular). Residues 35–276 (TQPVVVVAIV…FCSYIFSHSM (242 aa)) form the GB1/RHD3-type G domain. GTP-binding positions include 45 to 52 (GLYRTGKS), 67 to 69 (VAS), 181 to 182 (RD), and leucine 245. The segment at 529–586 (MEIAKQNWLAEQQKMQEQQMQEQAAQLSTTFQAQNRSLLSELQHAQRTVNNDDPCVLL) is required for tetramerization, but not for dimerization. At cysteine 583 the chain carries Cysteine methyl ester. Cysteine 583 is lipidated: S-geranylgeranyl cysteine. A propeptide spans 584-586 (VLL) (removed in mature form).

The protein belongs to the TRAFAC class dynamin-like GTPase superfamily. GB1/RHD3 GTPase family. GB1 subfamily. As to quaternary structure, homodimer; homodimerizes upon GTP-binding, forming a close face-to-face dimer. Heterodimer with other family members, including GBP1, GBP2, GBP3 and GBP4. May also form tetramers (dimer of dimers) in the presence of GTP. Interacts with NLRP3, possibly in its tetrameric form, and promotes PYCARD/ASC polymerization. In terms of assembly, homodimer; homodimerizes upon GTP-binding. GDP-bound form remains homodimeric. Homodimer; homodimerizes upon GTP-binding. GDP-bound is monomeric. In terms of processing, isoprenylation is required for proper subcellular location. Expressed in peripheral blood monocytes (at protein level).

Its subcellular location is the cytoplasmic vesicle membrane. It localises to the golgi apparatus membrane. The protein resides in the cytoplasm. The enzyme catalyses GTP + H2O = GDP + phosphate + H(+). In terms of biological role, interferon (IFN)-inducible GTPase that plays important roles in innate immunity against a diverse range of bacterial, viral and protozoan pathogens. Hydrolyzes GTP, but in contrast to other family members, does not produce GMP. Following infection, recruited to the pathogen-containing vacuoles or vacuole-escaped bacteria and acts as a positive regulator of inflammasome assembly by promoting the release of inflammasome ligands from bacteria. Acts by promoting lysis of pathogen-containing vacuoles, releasing pathogens into the cytosol. Following pathogen release in the cytosol, promotes recruitment of proteins that mediate bacterial cytolysis: this liberates ligands that are detected by inflammasomes, such as lipopolysaccharide (LPS) that activates the non-canonical CASP4/CASP11 inflammasome or double-stranded DNA (dsDNA) that activates the AIM2 inflammasome. As an activator of NLRP3 inflammasome assembly: promotes selective NLRP3 inflammasome assembly in response to microbial and soluble, but not crystalline, agents. Independently of its GTPase activity, acts as an inhibitor of various viruses infectivity, such as HIV-1, Zika and influenza A viruses, by inhibiting FURIN-mediated maturation of viral envelope proteins. Functionally, antigenic tumor-specific truncated splice form. The polypeptide is Guanylate-binding protein 5 (Homo sapiens (Human)).